A 75-amino-acid chain; its full sequence is UPF0352 protein YejL (75 aa).

Belongs to the UPF0352 family.

The sequence is that of UPF0352 protein YejL from Salmonella arizonae (strain ATCC BAA-731 / CDC346-86 / RSK2980).